A 180-amino-acid chain; its full sequence is Large ribosomal subunit protein uL5 (180 aa).

Belongs to the universal ribosomal protein uL5 family. As to quaternary structure, part of the 50S ribosomal subunit; part of the 5S rRNA/L5/L18/L25 subcomplex. Contacts the 5S rRNA and the P site tRNA. Forms a bridge to the 30S subunit in the 70S ribosome.

This is one of the proteins that bind and probably mediate the attachment of the 5S RNA into the large ribosomal subunit, where it forms part of the central protuberance. In the 70S ribosome it contacts protein S13 of the 30S subunit (bridge B1b), connecting the 2 subunits; this bridge is implicated in subunit movement. Contacts the P site tRNA; the 5S rRNA and some of its associated proteins might help stabilize positioning of ribosome-bound tRNAs. This Moorella thermoacetica (strain ATCC 39073 / JCM 9320) protein is Large ribosomal subunit protein uL5.